Reading from the N-terminus, the 318-residue chain is uncharacterized protein (318 aa).

This is an uncharacterized protein from Escherichia coli (strain K12).